The following is a 367-amino-acid chain: MKSLVLLLCLAQLWGCHSAPHGPGLIYRQPNCDDPETEEAALVAIDYINQNLPWGYKHTLNQIDEVKVWPQQPSGELFEIEIDTLETTCHVLDPTPVARCSVRQLKEHAVEGDCDFQLLKLDGKFSVVYAKCDSSPDSAEDVRKVCQDCPLLAPLNDTRVVHAAKAALAAFNAQNNGSNFQLEEISRAQLVPLPPSTYVEFTVSGTDCVAKEATEAAKCNLLAEKQYGFCKATLSEKLGGAEVAVTCMVFQTQPVSSQPQPEGANEAVPTPVVDPDAPPSPPLGAPGLPPAGSPPDSHVLLAAPPGHQLHRAHYDLRHTFMGVVSLGSPSGEVSHPRKTRTVVQPSVGAAAGPVVPPCPGRIRHFKV.

A signal peptide spans 1 to 18 (MKSLVLLLCLAQLWGCHS). A Cystatin fetuin-A-type 1 domain is found at 27 to 133 (YRQPNCDDPE…KFSVVYAKCD (107 aa)). Cystine bridges form between Cys-32-Cys-358, Cys-89-Cys-100, Cys-114-Cys-132, Cys-146-Cys-149, Cys-208-Cys-219, and Cys-230-Cys-247. At Ser-134 the chain carries Phosphoserine. Ser-135 and Ser-138 each carry phosphoserine; by FAM20C. One can recognise a Cystatin fetuin-A-type 2 domain in the interval 144–255 (KVCQDCPLLA…TCMVFQTQPV (112 aa)). N-linked (GlcNAc...) (complex) asparagine glycosylation is found at Asn-156 and Asn-176. Residues 255 to 298 (VSSQPQPEGANEAVPTPVVDPDAPPSPPLGAPGLPPAGSPPDSH) form a disordered region. Thr-270 carries an O-linked (GalNAc...) threonine glycan. The span at 276 to 293 (DAPPSPPLGAPGLPPAGS) shows a compositional bias: pro residues. Ser-280 and Ser-293 each carry an O-linked (GalNAc...) serine glycan. A propeptide spans 301-340 (LAAPPGHQLHRAHYDLRHTFMGVVSLGSPSGEVSHPRKTR) (connecting peptide). A Phosphothreonine; by FAM20C modification is found at Thr-319. 3 positions are modified to phosphoserine; by FAM20C: Ser-325, Ser-328, and Ser-330. O-linked (GalNAc...) threonine glycans are attached at residues Thr-339 and Thr-341. O-linked (GalNAc...) serine glycosylation occurs at Ser-346.

This sequence belongs to the fetuin family. Alpha-2-HS glycoprotein derives from this precursor, when the connecting peptide is cleaved off. The two chains A and B are held together by a single disulfide bond. Phosphorylated by FAM20C in the extracellular medium. Post-translationally, O- and N-glycosylated. O-glycosylated with core 1 or possibly core 8 glycans. N-glycan at Asn-156: Hex5HexNAc4; N-glycan heterogeneity at Asn-176: Hex5HexNAc4 (major) and Hex6HexNAc5 (minor). In terms of tissue distribution, synthesized in liver and selectively concentrated in bone matrix. Secreted in plasma. It is also found in dentin in much higher quantities than other plasma proteins.

The protein localises to the secreted. In terms of biological role, promotes endocytosis, possesses opsonic properties and influences the mineral phase of bone. Shows affinity for calcium and barium ions. The polypeptide is Alpha-2-HS-glycoprotein (AHSG) (Homo sapiens (Human)).